The following is a 273-amino-acid chain: Ribosomal RNA small subunit methyltransferase A (273 aa).

S-adenosyl-L-methionine-binding residues include H10, L12, G37, E58, D83, and N108.

The protein belongs to the class I-like SAM-binding methyltransferase superfamily. rRNA adenine N(6)-methyltransferase family. RsmA subfamily.

It localises to the cytoplasm. It carries out the reaction adenosine(1518)/adenosine(1519) in 16S rRNA + 4 S-adenosyl-L-methionine = N(6)-dimethyladenosine(1518)/N(6)-dimethyladenosine(1519) in 16S rRNA + 4 S-adenosyl-L-homocysteine + 4 H(+). Specifically dimethylates two adjacent adenosines (A1518 and A1519) in the loop of a conserved hairpin near the 3'-end of 16S rRNA in the 30S particle. May play a critical role in biogenesis of 30S subunits. The chain is Ribosomal RNA small subunit methyltransferase A from Picosynechococcus sp. (strain ATCC 27264 / PCC 7002 / PR-6) (Agmenellum quadruplicatum).